A 561-amino-acid polypeptide reads, in one-letter code: Carboxylesterase patB (561 aa).

A signal peptide spans 1–19; sequence MQIINWASLLLVTWETVVA. 3 N-linked (GlcNAc...) asparagine glycosylation sites follow: N38, N69, and N109. S263 acts as the Acyl-ester intermediate in catalysis. S263 contacts substrate. The N-linked (GlcNAc...) asparagine glycan is linked to N316. E385 serves as the catalytic Charge relay system. N-linked (GlcNAc...) asparagine glycans are attached at residues N393, N412, N429, and N496.

This sequence belongs to the type-B carboxylesterase/lipase family.

The protein resides in the cytoplasm. The protein localises to the cytosol. The catalysed reaction is a carboxylic ester + H2O = an alcohol + a carboxylate + H(+). The protein operates within mycotoxin biosynthesis; patulin biosynthesis. Functionally, carboxylesterase; part of the gene cluster that mediates the biosynthesis of patulin, an acetate-derived tetraketide mycotoxin produced by several fungal species that shows antimicrobial properties against several bacteria. The function of patB in patulin synthesis has still to be characterized. The pathway begins with the synthesis of 6-methylsalicylic acid by the polyketide synthase (PKS) patK via condensation of acetate and malonate units. The 6-methylsalicylic acid decarboxylase patG then catalyzes the decarboxylation of 6-methylsalicylic acid to yield m-cresol (also known as 3-methylphenol). These first reactions occur in the cytosol. The intermediate m-cresol is then transported into the endoplasmic reticulum where the cytochrome P450 monooxygenase patH converts it to m-hydroxybenzyl alcohol, which is further converted to gentisyl alcohol by the cytochrome P450 monooxygenase patI. The oxidoreductases patJ and patO further convert gentisyl alcohol to isoepoxydon in the vacuole. PatN catalyzes then the transformation of isoepoxydon into phyllostine. The cluster protein patF is responsible for the conversion from phyllostine to neopatulin whereas the alcohol dehydrogenase patD converts neopatulin to E-ascladiol. The steps between isoepoxydon and E-ascladiol occur in the cytosol, and E-ascladiol is probably secreted to the extracellular space by one of the cluster-specific transporters patC or patM. Finally, the secreted patulin synthase patE catalyzes the conversion of E-ascladiol to patulin. This Penicillium expansum (Blue mold rot fungus) protein is Carboxylesterase patB.